A 389-amino-acid chain; its full sequence is tRNA-specific 2-thiouridylase MnmA (389 aa).

Residues 35–42 and M61 contribute to the ATP site; that span reads GMSGGVDS. Positions 121–123 are interaction with target base in tRNA; the sequence is NPD. Residue C126 is the Nucleophile of the active site. A disulfide bridge connects residues C126 and C223. G151 contributes to the ATP binding site. Residues 173 to 175 form an interaction with tRNA region; sequence KDQ. Residue C223 is the Cysteine persulfide intermediate of the active site. The interaction with tRNA stretch occupies residues 335-336; it reads RY.

The protein belongs to the MnmA/TRMU family.

The protein localises to the cytoplasm. It carries out the reaction S-sulfanyl-L-cysteinyl-[protein] + uridine(34) in tRNA + AH2 + ATP = 2-thiouridine(34) in tRNA + L-cysteinyl-[protein] + A + AMP + diphosphate + H(+). Catalyzes the 2-thiolation of uridine at the wobble position (U34) of tRNA, leading to the formation of s(2)U34. The polypeptide is tRNA-specific 2-thiouridylase MnmA (Actinobacillus succinogenes (strain ATCC 55618 / DSM 22257 / CCUG 43843 / 130Z)).